A 622-amino-acid chain; its full sequence is MDVLRTASARRTFKWQAAGILARTSWVCRSCRSQFVAPKAARRTLATSTTTTTPTAPDNKPFYVTTPIFYVNASPHVGHMYSMVLGDVLKRWQTLKGNQAILCTGTDEHGTKVQRAAIANDMDPKQFCDLNSAKFQELAAACRIDYDRFMRTTDQDHVEAVKHFWLLLKEKGLIYEAKHEGWYCVSDECFYPESQLEKRQDPFTGEVYVASIESGNKVEWIEEKNYHFRMTALKDQLLEFYKNNPDWIVPQTRMNQVVDWVTNNLEDLSISRPVSRLSWGIRVPDDESQTIYVWVDALINYITMAGYPYWPPGREHLGGWPVDVHVIGKDILRFHCIYWPALLLALDLPLPKRILSHAHWTMEKKKMSKSIGNVVNPFYAMERFGIDTMRFYMIHNGGIANDADYSNDWLTVEYKKHLQNGVGNLSARVTRPKQWSLRRAVQSYQDGNMLLQSTGEQINDSCVEHITRLDKLASTIDNEMLQLNPSHALQKIMGLIGETNAFISNAEPWVIVKKQDSEALVDRIILTAGESLRIAGILLQPFMPDKAAQLLDLLGVENHNRTFHHARPLVDATYGTAFRTFGKEGIFPPPILDDIKGMGPDAGSKKHSSGNKPSSGNKKPTA.

Residues P67 to H79 carry the 'HIGH' region motif. A 'KMSKS' region motif is present at residues K366–S370. K369 is an ATP binding site. The interval L592 to A622 is disordered. Over residues G610–A622 the composition is skewed to low complexity.

Belongs to the class-I aminoacyl-tRNA synthetase family.

The protein localises to the mitochondrion matrix. The catalysed reaction is tRNA(Met) + L-methionine + ATP = L-methionyl-tRNA(Met) + AMP + diphosphate. The chain is Probable methionine--tRNA ligase, mitochondrial from Neurospora crassa (strain ATCC 24698 / 74-OR23-1A / CBS 708.71 / DSM 1257 / FGSC 987).